Consider the following 922-residue polypeptide: Isoleucine--tRNA ligase (922 aa).

The 'HIGH' region signature appears at 58–68 (PYANGDIHIGH). An L-isoleucyl-5'-AMP-binding site is contributed by glutamate 552. Positions 593–597 (KMSKS) match the 'KMSKS' region motif. ATP is bound at residue lysine 596. The Zn(2+) site is built by cysteine 885, cysteine 888, cysteine 905, and cysteine 908.

It belongs to the class-I aminoacyl-tRNA synthetase family. IleS type 1 subfamily. In terms of assembly, monomer. Zn(2+) is required as a cofactor.

Its subcellular location is the cytoplasm. The enzyme catalyses tRNA(Ile) + L-isoleucine + ATP = L-isoleucyl-tRNA(Ile) + AMP + diphosphate. In terms of biological role, catalyzes the attachment of isoleucine to tRNA(Ile). As IleRS can inadvertently accommodate and process structurally similar amino acids such as valine, to avoid such errors it has two additional distinct tRNA(Ile)-dependent editing activities. One activity is designated as 'pretransfer' editing and involves the hydrolysis of activated Val-AMP. The other activity is designated 'posttransfer' editing and involves deacylation of mischarged Val-tRNA(Ile). The chain is Isoleucine--tRNA ligase from Ruthia magnifica subsp. Calyptogena magnifica.